A 226-amino-acid chain; its full sequence is Sugar transporter SWEET1 (226 aa).

A run of 7 helical transmembrane segments spans residues 8–28 (LLSTTAVISTVFQFLSGAMIC), 42–62 (GVPFICGFLSCSFWLRYGVLT), 67–87 (IVLVNIIGSTLFLIYTLIYYV), 94–114 (AFVRQFAFVLAVLIAVVVVYT), 127–147 (ITGIFCCIVTVCFFAAPLATL), 161–181 (LPLIATSFLVSLQWLIYGILI), and 185–205 (FIQIPNFLGCLLSMLQLSLFV). Positions 8–92 (LLSTTAVIST…LIYYVFTVNK (85 aa)) constitute a MtN3/slv 1 domain. In terms of domain architecture, MtN3/slv 2 spans 129–210 (GIFCCIVTVC…LSLFVVYPPR (82 aa)).

Belongs to the SWEET sugar transporter family.

Its subcellular location is the golgi apparatus membrane. It localises to the cell membrane. Mediates both low-affinity uptake and efflux of sugar across the membrane. In Drosophila pseudoobscura pseudoobscura (Fruit fly), this protein is Sugar transporter SWEET1 (slv).